The following is a 293-amino-acid chain: Protease HtpX (293 aa).

Helical transmembrane passes span 4–24 (IALF…VLSL) and 34–54 (GLMI…LLMS). Histidine 139 provides a ligand contact to Zn(2+). Residue glutamate 140 is part of the active site. Position 143 (histidine 143) interacts with Zn(2+). Helical transmembrane passes span 158–178 (VVNT…AGFM) and 193–213 (LIYF…ASII). Residue glutamate 222 participates in Zn(2+) binding.

This sequence belongs to the peptidase M48B family. It depends on Zn(2+) as a cofactor.

The protein localises to the cell inner membrane. This Escherichia fergusonii (strain ATCC 35469 / DSM 13698 / CCUG 18766 / IAM 14443 / JCM 21226 / LMG 7866 / NBRC 102419 / NCTC 12128 / CDC 0568-73) protein is Protease HtpX.